Here is a 780-residue protein sequence, read N- to C-terminus: Kazrin (780 aa).

Residues 79–261 adopt a coiled-coil conformation; the sequence is AQVLLREEVV…LATLTKDVPK (183 aa). Residues 295–430 form a disordered region; it reads QQTLYHSHPP…TRHSLSLSEG (136 aa). A phosphoserine mark is found at S357, S372, and S392. Positions 416-427 are enriched in polar residues; it reads SQCSPTRHSLSL. 3 consecutive SAM domains span residues 451–516, 529–593, and 617–684; these read WKAG…YRDA, DHHW…LYQV, and WTNQ…STVF. The interval 692 to 780 is disordered; that stretch reads IRESERFGTP…EYSSLEVTNV (89 aa). Residues 760 to 771 are compositionally biased toward basic and acidic residues; that stretch reads LQGRPEQCRLEE.

This sequence belongs to the kazrin family.

The protein resides in the cell junction. Its subcellular location is the nucleus. The protein localises to the cytoplasm. It localises to the cytoskeleton. Its function is as follows. Component of the cornified envelope of keratinocytes. May be involved in the interplay between adherens junctions and desmosomes. The function in the nucleus is not known. In Rattus norvegicus (Rat), this protein is Kazrin (Kazn).